Reading from the N-terminus, the 3032-residue chain is Biorientation of chromosomes in cell division protein 1-like 1 (3032 aa).

Residues 1–31 (MATNPQPQPPPPAPPPPPPQPQPPPPPPGPG) are compositionally biased toward pro residues. Disordered regions lie at residues 1–48 (MATN…GAGD), 164–195 (EEAAGSTAPDDEKPESSVITQGAPAPGPSANV), 214–397 (NAAR…LDSD), and 409–465 (VHTS…RGVR). Residues 32–46 (AGPGASGPGSAGAGA) are compositionally biased toward gly residues. A compositionally biased stretch (polar residues) spans 234–243 (KLSSQPSTDV). The span at 244–261 (STDKERGSEDATEREKAT) shows a compositional bias: basic and acidic residues. Phosphoserine is present on serine 264. A compositionally biased stretch (basic and acidic residues) spans 310 to 391 (TDPKIKSMDK…RAAEGTKEDC (82 aa)). Residues 416 to 441 (SFEEDTEEEVVVSESMEEGEITSEDE) are compositionally biased toward acidic residues. N6-acetyllysine is present on lysine 471. Residues serine 480 and serine 482 each carry the phosphoserine modification. Disordered regions lie at residues 480 to 1153 (SDSD…HKAT), 1165 to 1296 (MVDS…HNSN), 1309 to 1366 (GGRA…LSED), 1424 to 1491 (AAGE…SGRR), 1675 to 1701 (GSLSSEDVDGSQENRIQVGPKKETEGT), 1740 to 1858 (AKPQ…GHAS), and 1934 to 1978 (ALAG…ISTG). Composition is skewed to basic and acidic residues over residues 488–503 (VEQRRQSIAKEKEERL) and 510–525 (REKLEEKRKQKAEKTK). Lysine 534 is modified (N6-acetyllysine). Basic and acidic residues-rich tracts occupy residues 547 to 568 (LEPKAPRIKEVLKERKVLEKKV) and 578 to 653 (SRNV…EYKR). Residues serine 632 and serine 656 each carry the phosphoserine modification. At threonine 657 the chain carries Phosphothreonine. Basic and acidic residues-rich tracts occupy residues 668–736 (TDTR…DKPS), 743–768 (GDSVHKMSDETELHSSEKGETEESVR), and 799–846 (RDGK…KLQK). A compositionally biased stretch (polar residues) spans 848 to 859 (ALSSKQHSVTSQ). Basic and acidic residues-rich tracts occupy residues 860 to 872 (KRSESCSEDKCET), 934 to 960 (KPDKEKNTEDNDTERQRKFKLEDRTSE), 978 to 1015 (AQKDSGHRAKLASIKEKHKTDKDSTSSKLERKVSDGHR), and 1022 to 1069 (SNKD…ENRR). Serine 1071 is modified (phosphoserine). A compositionally biased stretch (polar residues) spans 1086-1096 (MSGTTSSSSLQ). At serine 1138 the chain carries Phosphoserine. Residues 1272–1286 (STDSDLLSSSGSVTV) are compositionally biased toward low complexity. Residues 1312–1329 (ASTSLANHSDVPNQYSTV) are compositionally biased toward polar residues. Residues serine 1315 and serine 1364 each carry the phosphoserine modification. Basic and acidic residues-rich tracts occupy residues 1428–1470 (HVVD…RRDS) and 1479–1491 (GKMERGAAGSGRR). 2 positions are modified to phosphoserine: serine 1676 and serine 1685. Basic and acidic residues predominate over residues 1958–1970 (HHSDSQLTRKETV). A phosphoserine mark is found at serine 1989, serine 2001, serine 2092, and serine 2166. Positions 2082 to 2101 (PMPSAVSGENSQLTASRSEE) are disordered. Positions 2088–2097 (SGENSQLTAS) are enriched in polar residues. 4 disordered regions span residues 2303–2322 (EENQQATHNPEGNGGHLATK), 2370–2469 (EPSV…HCLT), 2536–2559 (EGGLPTKSDHSGTWTSEGSPEKMG), and 2575–2596 (DVTLPPEDNGCGVGNEESPPKG). Phosphoserine is present on residues serine 2417 and serine 2443. A compositionally biased stretch (basic and acidic residues) spans 2449–2459 (CLREPEQKPAE). Residue serine 2554 is modified to Phosphoserine. Residue serine 2681 is modified to Phosphoserine. Residues 2682 to 3032 (TEALSGCSVE…DENPLKKAKR (351 aa)) are disordered. 2 stretches are compositionally biased toward acidic residues: residues 2692–2701 (ADPEEVEEEE) and 2715–2725 (SSEEELDDSPD). Residues 2727–2750 (LDSRIETAQRQYSETEPHDTKEEN) show a composition bias toward basic and acidic residues. The segment covering 2758-2769 (SSVTSKTNSSTG) has biased composition (polar residues). Positions 2782-2804 (TGEKTEPNEDDGSIKSQEDDHPI) are enriched in basic and acidic residues. Basic residues predominate over residues 2805 to 2815 (IIKRRRGRPRK). Residues 2807 to 2819 (KRRRGRPRKYPAE) constitute a DNA-binding region (a.T hook). The span at 2822 to 2832 (FKSKEDSKTET) shows a compositional bias: basic and acidic residues. A compositionally biased stretch (polar residues) spans 2833-2843 (DITTVEQSSPS). Phosphoserine occurs at positions 2840 and 2841. Residues 2853-2867 (ESNKEIANLEEKSTS) show a composition bias toward basic and acidic residues. The residue at position 2888 (serine 2888) is a Phosphoserine. Threonine 2890 carries the phosphothreonine modification. Phosphoserine occurs at positions 2892, 2898, and 2907. Residues lysine 2915 and lysine 2916 each participate in a glycyl lysine isopeptide (Lys-Gly) (interchain with G-Cter in ubiquitin) cross-link. Acidic residues predominate over residues 2919 to 2932 (ESDEEEEEEEEEEP). Serine 2920 is modified (phosphoserine). Residues 2975–2987 (LAKEKLSTSEKVS) show a composition bias toward basic and acidic residues. Serine 3000 is subject to Phosphoserine. The span at 3020–3032 (QKVDENPLKKAKR) shows a compositional bias: basic and acidic residues.

The protein belongs to the BOD1 family. In terms of assembly, interacts (via COMPASS-Shg1 domain) with SETD1A at stalled replication forks; this interaction mediates FANCD2-dependent nucleosome remodeling at reversed forks protecting them from nucleolytic degradation.

The protein resides in the chromosome. Its function is as follows. Component of the fork protection machinery required to protect stalled/damaged replication forks from uncontrolled DNA2-dependent resection. Acts by stabilizing RAD51 at stalled replication forks and protecting RAD51 nucleofilaments from the antirecombinogenic activities of FBH1 and BLM. Does not regulate spindle orientation. In Mus musculus (Mouse), this protein is Biorientation of chromosomes in cell division protein 1-like 1.